Consider the following 138-residue polypeptide: Putative pre-16S rRNA nuclease (138 aa).

It belongs to the YqgF nuclease family.

Its subcellular location is the cytoplasm. Could be a nuclease involved in processing of the 5'-end of pre-16S rRNA. This is Putative pre-16S rRNA nuclease from Shigella dysenteriae serotype 1 (strain Sd197).